A 218-amino-acid polypeptide reads, in one-letter code: uncharacterized protein (218 aa).

This is an uncharacterized protein from Mycoplasma genitalium (strain ATCC 33530 / DSM 19775 / NCTC 10195 / G37) (Mycoplasmoides genitalium).